A 616-amino-acid chain; its full sequence is UvrABC system protein C (616 aa).

One can recognise a GIY-YIG domain in the interval 21–100 (TCPGVYQFKN…IKDLKPRYNI (80 aa)). The UVR domain maps to 214-249 (GALIRTLSAEMHRYADELRFEEAAELKIQIEGLRKY).

Belongs to the UvrC family. Interacts with UvrB in an incision complex.

It localises to the cytoplasm. In terms of biological role, the UvrABC repair system catalyzes the recognition and processing of DNA lesions. UvrC both incises the 5' and 3' sides of the lesion. The N-terminal half is responsible for the 3' incision and the C-terminal half is responsible for the 5' incision. In Prosthecochloris aestuarii (strain DSM 271 / SK 413), this protein is UvrABC system protein C.